An 835-amino-acid chain; its full sequence is Adhesion G protein-coupled receptor E5 (835 aa).

The signal sequence occupies residues 1–20 (MGGRVFLAFCVWLTLPGAET). The Extracellular portion of the chain corresponds to 21 to 552 (QDSRGCARWC…EDWKLTLITR (532 aa)). An EGF-like 1 domain is found at 22–63 (DSRGCARWCPQNSSCVNATACRCNPGFSSFSEIITTPTETCD). 15 disulfide bridges follow: Cys26–Cys36, Cys30–Cys42, Cys44–Cys62, Cys68–Cys82, Cys76–Cys91, Cys93–Cys114, Cys120–Cys133, Cys127–Cys142, Cys144–Cys158, Cys164–Cys177, Cys171–Cys186, Cys188–Cys207, Cys213–Cys226, Cys220–Cys235, and Cys237–Cys256. Asn33 and Asn38 each carry an N-linked (GlcNAc...) asparagine glycan. Positions 64-115 (DINECATPSKVSCGKFSDCWNTEGSYDCVCSPGYEPVSGAKTFKNESENTCQ) constitute an EGF-like 2; calcium-binding domain. The N-linked (GlcNAc...) asparagine glycan is linked to Asn108. One can recognise an EGF-like 3; calcium-binding domain in the interval 116–159 (DVDECQQNPRLCKSYGTCVNTLGSYTCQCLPGFKFIPEDPKVCT). Residues 160–208 (DVNECTSGQNPCHSSTHCLNNVGSYQCRCRPGWQPIPGSPNGPNNTVCE) form the EGF-like 4; calcium-binding domain. Asn203 carries N-linked (GlcNAc...) asparagine glycosylation. In terms of domain architecture, EGF-like 5; calcium-binding spans 209 to 257 (DVDECSSGQHQCDSSTVCFNTVGSYSCRCRPGWKPRHGIPNNQKDTVCE). One can recognise a GAIN-B domain in the interval 349–543 (PFTYISPSNT…AILMAHYDVE (195 aa)). N-linked (GlcNAc...) asparagine glycosylation is found at Asn371, Asn406, Asn413, Asn453, and Asn520. 2 disulfides stabilise this stretch: Cys495/Cys525 and Cys513/Cys527. A GPS region spans residues 495–543 (CAFWKSDSDRGGHWATEGCQVLGSKNGSTTCQCSHLSSFAILMAHYDVE). Residues 553 to 572 (VGLALSLFCLLLCILTFLLV) form a helical membrane-spanning segment. The Cytoplasmic portion of the chain corresponds to 573 to 581 (RPIQGSRTT). Residues 582 to 601 (IHLHLCICLFVGSTIFLAGI) form a helical membrane-spanning segment. Residues 602–620 (ENEGGQVGLRCRLVAGLLH) are Extracellular-facing. A helical membrane pass occupies residues 621–642 (YCFLAAFCWMSLEGLELYFLVV). At 643 to 653 (RVFQGQGLSTR) the chain is on the cytoplasmic side. A helical transmembrane segment spans residues 654 to 674 (WLCLIGYGVPLLIVGVSAAIY). The Extracellular segment spans residues 675–691 (SKGYGRPRYCWLDFEQG). A helical transmembrane segment spans residues 692 to 712 (FLWSFLGPVTFIILCNAVIFV). Topologically, residues 713 to 739 (TTVWKLTQKFSEINPDMKKLKKARALT) are cytoplasmic. The chain crosses the membrane as a helical span at residues 740 to 760 (ITAIAQLFLLGCTWVFGLFIF). At 761–766 (DDRSLV) the chain is on the extracellular side. The helical transmembrane segment at 767–789 (LTYVFTILNCLQGAFLYLLHCLL) threads the bilayer. Residues 790-835 (NKKVREEYRKWACLVAGGSKYSEFTSTTSGTGHNQTRALRASESGI) lie on the Cytoplasmic side of the membrane. The span at 814-826 (TSTTSGTGHNQTR) shows a compositional bias: polar residues. The interval 814 to 835 (TSTTSGTGHNQTRALRASESGI) is disordered. Position 815 is a phosphoserine (Ser815). Thr816 is modified (phosphothreonine). Ser818 is subject to Phosphoserine. Thr825 is modified (phosphothreonine). Residues Ser831 and Ser833 each carry the phosphoserine modification.

It belongs to the G-protein coupled receptor 2 family. LN-TM7 subfamily. Forms a heterodimer, consisting of a large extracellular region (alpha subunit) non-covalently linked to a seven-transmembrane moiety (beta subunit). Interacts with complement decay-accelerating factor (DAF). The largest isoform (isoform 1) interacts with chondroitin sulfate. Post-translationally, proteolytically cleaved into 2 subunits, an extracellular alpha subunit and a seven-transmembrane subunit. In terms of tissue distribution, broadly expressed, found on most hematopoietic cells, including activated lymphocytes, monocytes, macrophages, dendritic cells, and granulocytes. Expressed also abundantly by smooth muscle cells. Expressed in thyroid, colorectal, gastric, esophageal and pancreatic carcinomas too. Expression are increased under inflammatory conditions in the CNS of multiple sclerosis and in synovial tissue of patients with rheumatoid arthritis. Increased expression of CD97 in the synovium is accompanied by detectable levels of soluble CD97 in the synovial fluid.

The protein localises to the cell membrane. The protein resides in the secreted. It is found in the extracellular space. Functionally, receptor potentially involved in both adhesion and signaling processes early after leukocyte activation. Plays an essential role in leukocyte migration. The chain is Adhesion G protein-coupled receptor E5 from Homo sapiens (Human).